We begin with the raw amino-acid sequence, 210 residues long: Urease accessory protein UreF (210 aa).

Belongs to the UreF family. In terms of assembly, ureD, UreF and UreG form a complex that acts as a GTP-hydrolysis-dependent molecular chaperone, activating the urease apoprotein by helping to assemble the nickel containing metallocenter of UreC. The UreE protein probably delivers the nickel.

It is found in the cytoplasm. Its function is as follows. Required for maturation of urease via the functional incorporation of the urease nickel metallocenter. This Cereibacter sphaeroides (strain ATCC 17029 / ATH 2.4.9) (Rhodobacter sphaeroides) protein is Urease accessory protein UreF.